The primary structure comprises 710 residues: Lactoperoxidase (710 aa).

The signal sequence occupies residues 1-23; that stretch reads MKVLLHLPALLASLTLLQTAASA. The propeptide occupies 24–80; the sequence is SDDPTAETDIIHDTVEEVKVWVNKAFLDSRDRLKMAMTTKIHSTRHLSDYLKHAKGR. A disulfide bridge connects residues cysteine 130 and cysteine 143. Aspartate 223 serves as a coordination point for heme b. The active-site Proton acceptor is histidine 224. Aspartate 225 is a binding site for Ca(2+). 2 disulfide bridges follow: cysteine 244–cysteine 254 and cysteine 248–cysteine 272. The Ca(2+) site is built by threonine 299, phenylalanine 301, aspartate 303, and serine 305. Serine 313 carries the phosphoserine modification. A disulfide bridge links cysteine 352 with cysteine 363. Heme b-binding residues include glutamate 373 and histidine 466. Tyrosine 480 carries the 3'-nitrotyrosine modification. 2 cysteine pairs are disulfide-bonded: cysteine 571–cysteine 628 and cysteine 669–cysteine 694.

This sequence belongs to the peroxidase family. It depends on Ca(2+) as a cofactor. Heme b is required as a cofactor. Expressed in the colon, including colonocytes and mucin-containing goblet cells. Not detected in the ileum.

It is found in the secreted. The protein localises to the cytoplasm. The enzyme catalyses 2 a phenolic donor + H2O2 = 2 a phenolic radical donor + 2 H2O. It catalyses the reaction thiocyanate + H2O2 + H(+) = hypothiocyanous acid + H2O. The catalysed reaction is iodide + H2O2 = hypoiodite + H2O. In terms of biological role, heme-containing oxidoreductase which catalyzes the conversion of thiocyanate (SCN(-)) into antimicrobial agent hypothiocyanous acid (OSCN(-)) in the presence of hydrogen peroxide (H2O2). Also involved in the conversion of iodide (I(-)) into hypoiodite (IO(-)) in the presence of H2O2. Responsible for the inactivation of a wide range of micro-organisms and hence, important component of defense mechanism. May be implicated in airway host defense against infection. May contribute to maintaining an appropriate H2O2 cellular level, therefore protecting cells from H2O2-caused injuries and inflammation. This is Lactoperoxidase from Mus musculus (Mouse).